A 265-amino-acid chain; its full sequence is MKSVLGFKKAKANREKISMVTCYDYTLAKIINSTDIDCILVGDSGGMVLLGKKNTTYTTLDDMQFMTQAVANGATDKFIVADLPFMSYRQSLEITMQAVTTLIQSGAHAIKLEGSSGNLDIIKHIVNSGVPVMGHIGMTPQFINSFGGFKVQGRTEEAAKHLLEEAKLLEQAGCFGIVLECIPANIAKDITQNLDIPTIGIGAGSNTDGQILVLQDMLGMNTDFQPKFVKKYIDGSKLFSDAINTYVKETKANTFPTKEHCYDYC.

Mg(2+) contacts are provided by Asp43 and Asp82. Residues 43–44 (DS), Asp82, and Lys111 each bind 3-methyl-2-oxobutanoate. Glu113 is a Mg(2+) binding site. Glu180 acts as the Proton acceptor in catalysis.

The protein belongs to the PanB family. In terms of assembly, homodecamer; pentamer of dimers. It depends on Mg(2+) as a cofactor.

Its subcellular location is the cytoplasm. The catalysed reaction is 3-methyl-2-oxobutanoate + (6R)-5,10-methylene-5,6,7,8-tetrahydrofolate + H2O = 2-dehydropantoate + (6S)-5,6,7,8-tetrahydrofolate. It participates in cofactor biosynthesis; (R)-pantothenate biosynthesis; (R)-pantoate from 3-methyl-2-oxobutanoate: step 1/2. Catalyzes the reversible reaction in which hydroxymethyl group from 5,10-methylenetetrahydrofolate is transferred onto alpha-ketoisovalerate to form ketopantoate. The sequence is that of 3-methyl-2-oxobutanoate hydroxymethyltransferase from Francisella tularensis subsp. novicida (strain U112).